The primary structure comprises 337 residues: Putative carboxypeptidase TP_0688 (337 aa).

The active-site Nucleophile is the serine 118. Catalysis depends on charge relay system residues glutamate 234 and histidine 302.

The protein belongs to the peptidase S66 family.

The chain is Putative carboxypeptidase TP_0688 from Treponema pallidum (strain Nichols).